A 95-amino-acid polypeptide reads, in one-letter code: YcgL domain-containing protein APJL_0712 (95 aa).

The 85-residue stretch at 4-88 folds into the YcgL domain; that stretch reads HLCAIYKSPK…PPENLLKTFL (85 aa).

The sequence is that of YcgL domain-containing protein APJL_0712 from Actinobacillus pleuropneumoniae serotype 3 (strain JL03).